We begin with the raw amino-acid sequence, 44 residues long: Photosystem I reaction center subunit IX (44 aa).

Residues 7–27 (YLSVAPVLATLWFGSLAGLLI) traverse the membrane as a helical segment.

Belongs to the PsaJ family.

Its subcellular location is the plastid. The protein resides in the chloroplast thylakoid membrane. In terms of biological role, may help in the organization of the PsaE and PsaF subunits. The chain is Photosystem I reaction center subunit IX from Piper cenocladum (Ant piper).